The chain runs to 306 residues: NADH-cytochrome b5 reductase 2-B (306 aa).

Residues 12–32 (PLLLSSGIAVTAAAAVYFSTG) traverse the membrane as a helical segment. The region spanning 53 to 157 (STWVDLPLVK…TGPIVKYEWK (105 aa)) is the FAD-binding FR-type domain. 160–195 (KFDSVTLLGAGSGITPLYQLMGSILSNPEDKTKINL) provides a ligand contact to FAD.

The protein belongs to the flavoprotein pyridine nucleotide cytochrome reductase family. It depends on FAD as a cofactor.

It is found in the mitochondrion outer membrane. The enzyme catalyses 2 Fe(III)-[cytochrome b5] + NADH = 2 Fe(II)-[cytochrome b5] + NAD(+) + H(+). Its function is as follows. May mediate the reduction of outer membrane cytochrome b5. This is NADH-cytochrome b5 reductase 2-B (MCR1B) from Vanderwaltozyma polyspora (strain ATCC 22028 / DSM 70294 / BCRC 21397 / CBS 2163 / NBRC 10782 / NRRL Y-8283 / UCD 57-17) (Kluyveromyces polysporus).